The chain runs to 215 residues: Cytochrome c biogenesis ATP-binding export protein CcmA (215 aa).

Residues 7–209 (LKIDRLACQR…ALTVLNLAQY (203 aa)) form the ABC transporter domain. Residue 39–46 (GHNGIGKT) participates in ATP binding.

The protein belongs to the ABC transporter superfamily. CcmA exporter (TC 3.A.1.107) family. The complex is composed of two ATP-binding proteins (CcmA) and two transmembrane proteins (CcmB).

Its subcellular location is the cell inner membrane. It carries out the reaction heme b(in) + ATP + H2O = heme b(out) + ADP + phosphate + H(+). Its function is as follows. Part of the ABC transporter complex CcmAB involved in the biogenesis of c-type cytochromes; once thought to export heme, this seems not to be the case, but its exact role is uncertain. Responsible for energy coupling to the transport system. The chain is Cytochrome c biogenesis ATP-binding export protein CcmA from Mannheimia succiniciproducens (strain KCTC 0769BP / MBEL55E).